Here is a 290-residue protein sequence, read N- to C-terminus: Elongation factor Ts (290 aa).

The segment at 81 to 84 (TDFV) is involved in Mg(2+) ion dislocation from EF-Tu.

It belongs to the EF-Ts family.

It is found in the cytoplasm. Functionally, associates with the EF-Tu.GDP complex and induces the exchange of GDP to GTP. It remains bound to the aminoacyl-tRNA.EF-Tu.GTP complex up to the GTP hydrolysis stage on the ribosome. This is Elongation factor Ts from Vesicomyosocius okutanii subsp. Calyptogena okutanii (strain HA).